Consider the following 321-residue polypeptide: Tetraacyldisaccharide 4'-kinase (321 aa).

54–61 (SVGGTGKT) lines the ATP pocket.

Belongs to the LpxK family.

It carries out the reaction a lipid A disaccharide + ATP = a lipid IVA + ADP + H(+). It functions in the pathway glycolipid biosynthesis; lipid IV(A) biosynthesis; lipid IV(A) from (3R)-3-hydroxytetradecanoyl-[acyl-carrier-protein] and UDP-N-acetyl-alpha-D-glucosamine: step 6/6. Its function is as follows. Transfers the gamma-phosphate of ATP to the 4'-position of a tetraacyldisaccharide 1-phosphate intermediate (termed DS-1-P) to form tetraacyldisaccharide 1,4'-bis-phosphate (lipid IVA). The chain is Tetraacyldisaccharide 4'-kinase from Rickettsia bellii (strain OSU 85-389).